We begin with the raw amino-acid sequence, 600 residues long: Na(+)/dicarboxylate cotransporter 3 (600 aa).

Topologically, residues 1–16 are cytoplasmic; the sequence is MAALAALAKKVWSARR. A helical transmembrane segment spans residues 17–37; the sequence is LLVLLLVPLALLPILFALPPK. Residues 38-55 lie on the Extracellular side of the membrane; that stretch reads EGRCLYVILLMAVYWCTE. Residues 56-76 traverse the membrane as a helical segment; the sequence is ALPLSVTALLPIILFPFMGIL. Residues 77-82 are Cytoplasmic-facing; the sequence is PSSKVC. The helical transmembrane segment at 83-103 threads the bilayer; the sequence is PQYFLDTNFLFLSGLIMASAI. Over 104 to 137 the chain is Extracellular; sequence EERNLHRRIALKVLMLVGVQPARLILGMMVTTSF. A helical membrane pass occupies residues 138–158; sequence LSMWLSNTASTAMMLPIASAI. Over 159-229 the chain is Cytoplasmic; that stretch reads LKSLFGQRDT…KEEEHRRNIW (71 aa). Residues 230–250 form a helical membrane-spanning segment; that stretch reads KGFLISIPYSASIGGTATLTG. Residues 251-278 lie on the Extracellular side of the membrane; sequence TAPNLILLGQLKSFFPQCDVVNFGSWFI. Residues 279–299 form a helical membrane-spanning segment; the sequence is FAFPLMLLFLLVGWLWISFLY. The Cytoplasmic segment spans residues 300–336; it reads GGMSWRGWRKKNSKLQDVAEDKAKAVIQEEFQNLGPI. The helical transmembrane segment at 337-357 threads the bilayer; the sequence is KFAEQAVFILFCLFAILLFSR. The Extracellular portion of the chain corresponds to 358-372; sequence DPKFIPGWASLFAPG. The chain crosses the membrane as a helical span at residues 373-393; the sequence is FVSDAVTGVAIVTILFFFPSQ. Residues 394-422 lie on the Cytoplasmic side of the membrane; it reads KPSLKWWFDFKAPNSETEPLLSWKKAQET. Positions 423–443 form an intramembrane region, helical; that stretch reads VPWNIILLLGGGFAMAKGCEE. The Cytoplasmic portion of the chain corresponds to 444 to 461; it reads SGLSAWIGGQLHPLEHVP. A helical transmembrane segment spans residues 462–482; it reads PLLAVLLITVVIAFFTEFASN. The Extracellular portion of the chain corresponds to 483 to 505; it reads TATIIIFLPVLAELAIRLHVHPL. Residues 506-526 traverse the membrane as a helical segment; sequence YLMIPGTVSCSYAFMLPVSTP. Topologically, residues 527-546 are cytoplasmic; that stretch reads PNSIAFSTGHLLVKDMVRTG. The chain crosses the membrane as a helical span at residues 547 to 567; that stretch reads LLMNLMGVLLLSLAMNTWAQA. At 568–600 the chain is on the extracellular side; the sequence is IFQLGTFPDWANTHAANVTALPPALTNNTVQTL. N-linked (GlcNAc...) asparagine glycosylation is found at Asn584 and Asn594.

The protein belongs to the SLC13A/DASS transporter (TC 2.A.47) family. NADC subfamily. As to expression, highly expressed in proximal parts of straight tubules in the kidney. Detected in placenta, in brain, and in liver. Strongly expressed within the meningeal layers of supporting tissue that surround the brain and relatively weakly expressed throughout the cerebral cortex, hippocampus, and cerebellum.

The protein resides in the cell membrane. It catalyses the reaction succinate(out) + 3 Na(+)(out) = succinate(in) + 3 Na(+)(in). It carries out the reaction 2-oxoglutarate(out) + 3 Na(+)(out) = 2-oxoglutarate(in) + 3 Na(+)(in). The enzyme catalyses N-acetyl-L-aspartate(out) + 3 Na(+)(out) = N-acetyl-L-aspartate(in) + 3 Na(+)(in). The catalysed reaction is glutarate(out) + 3 Na(+)(out) = glutarate(in) + 3 Na(+)(in). It catalyses the reaction fumarate(out) + 3 Na(+)(out) = fumarate(in) + 3 Na(+)(in). It carries out the reaction malate(out) + 3 Na(+)(out) = malate(in) + 3 Na(+)(in). The enzyme catalyses 2,2-dimethylsuccinate(out) + 3 Na(+)(out) = 2,2-dimethylsuccinate(in) + 3 Na(+)(in). The catalysed reaction is 2,3-dimethylsuccinate(out) + 3 Na(+)(out) = 2,3-dimethylsuccinate(in) + 3 Na(+)(in). It catalyses the reaction itaconate(out) + 3 Na(+)(out) = itaconate(in) + 3 Na(+)(in). With respect to regulation, li(+) decreases succinate transport in the presence of Na(+). In terms of biological role, high-affinity sodium-dicarboxylate cotransporter that accepts a range of substrates with 4-6 carbon atoms, such as the citric acid cycle intermediates succinate and alpha-ketoglutarate (2-oxoglutarate), as well as other compounds including N-acetyl-L-aspartate. Transports the dicarboxylate into the cell with a probable stoichiometry of 3 Na(+) for 1 divalent dicarboxylate, rendering the process electrogenic. Can transport citrate in a Na(+)-dependent manner, recognizing the divalent form of citrate rather than the trivalent form which is normally found in blood. Imports itaconate in hepatocytes leading to activation of TFEB-dependent lysosomal biogenesis involved in antibacterial innate immune response. In Rattus norvegicus (Rat), this protein is Na(+)/dicarboxylate cotransporter 3 (Slc13a3).